The chain runs to 491 residues: Probable cytosol aminopeptidase (491 aa).

Mn(2+) contacts are provided by lysine 261 and aspartate 266. Lysine 273 is a catalytic residue. Residues aspartate 284, aspartate 343, and glutamate 345 each contribute to the Mn(2+) site. The active site involves arginine 347.

It belongs to the peptidase M17 family. Mn(2+) is required as a cofactor.

Its subcellular location is the cytoplasm. The catalysed reaction is Release of an N-terminal amino acid, Xaa-|-Yaa-, in which Xaa is preferably Leu, but may be other amino acids including Pro although not Arg or Lys, and Yaa may be Pro. Amino acid amides and methyl esters are also readily hydrolyzed, but rates on arylamides are exceedingly low.. It catalyses the reaction Release of an N-terminal amino acid, preferentially leucine, but not glutamic or aspartic acids.. Its function is as follows. Presumably involved in the processing and regular turnover of intracellular proteins. Catalyzes the removal of unsubstituted N-terminal amino acids from various peptides. This Stenotrophomonas maltophilia (strain K279a) protein is Probable cytosol aminopeptidase.